The primary structure comprises 334 residues: GTPase Obg (334 aa).

The 159-residue stretch at 1–159 (MKFIDQAIIH…RDIQLELMLL (159 aa)) folds into the Obg domain. The disordered stretch occupies residues 67 to 86 (AQNGQNGSSRKSSGKKGDDI). Residues 68–77 (QNGQNGSSRK) are compositionally biased toward low complexity. Residues 160 to 333 (ADVGTLGMPN…LCSDITKYLK (174 aa)) enclose the OBG-type G domain. Residues 166–173 (GMPNVGKS), 191–195 (FTTLH), 213–216 (DIPG), 283–286 (NKID), and 314–316 (SSM) each bind GTP. Mg(2+) is bound by residues serine 173 and threonine 193.

Belongs to the TRAFAC class OBG-HflX-like GTPase superfamily. OBG GTPase family. In terms of assembly, monomer. Requires Mg(2+) as cofactor.

The protein resides in the cytoplasm. Functionally, an essential GTPase which binds GTP, GDP and possibly (p)ppGpp with moderate affinity, with high nucleotide exchange rates and a fairly low GTP hydrolysis rate. Plays a role in control of the cell cycle, stress response, ribosome biogenesis and in those bacteria that undergo differentiation, in morphogenesis control. This chain is GTPase Obg, found in Buchnera aphidicola subsp. Acyrthosiphon pisum (strain 5A).